The sequence spans 155 residues: Transcription antitermination protein NusB (155 aa).

It belongs to the NusB family.

Involved in transcription antitermination. Required for transcription of ribosomal RNA (rRNA) genes. Binds specifically to the boxA antiterminator sequence of the ribosomal RNA (rrn) operons. The polypeptide is Transcription antitermination protein NusB (Mesorhizobium japonicum (strain LMG 29417 / CECT 9101 / MAFF 303099) (Mesorhizobium loti (strain MAFF 303099))).